Reading from the N-terminus, the 176-residue chain is NAD(P)H-quinone oxidoreductase subunit 6, chloroplastic (176 aa).

The next 5 membrane-spanning stretches (helical) occupy residues 10–30 (FILVFLGSGLILGSLGVVFFT), 32–52 (TIFSAFSLGLVLVCVSLFYIL), 63–83 (LLIYVGAINVLIIFAVMFMNG), 92–112 (VWTVGDGITLMVCTSIFISQI), and 152–172 (FFLPFELISIILLVALIGAIF).

The protein belongs to the complex I subunit 6 family. In terms of assembly, NDH is composed of at least 16 different subunits, 5 of which are encoded in the nucleus.

The protein resides in the plastid. It is found in the chloroplast thylakoid membrane. It catalyses the reaction a plastoquinone + NADH + (n+1) H(+)(in) = a plastoquinol + NAD(+) + n H(+)(out). It carries out the reaction a plastoquinone + NADPH + (n+1) H(+)(in) = a plastoquinol + NADP(+) + n H(+)(out). Functionally, NDH shuttles electrons from NAD(P)H:plastoquinone, via FMN and iron-sulfur (Fe-S) centers, to quinones in the photosynthetic chain and possibly in a chloroplast respiratory chain. The immediate electron acceptor for the enzyme in this species is believed to be plastoquinone. Couples the redox reaction to proton translocation, and thus conserves the redox energy in a proton gradient. In Phaseolus vulgaris (Kidney bean), this protein is NAD(P)H-quinone oxidoreductase subunit 6, chloroplastic (ndhG).